The sequence spans 740 residues: Ion-translocating oxidoreductase complex subunit C (740 aa).

2 4Fe-4S ferredoxin-type domains span residues 369–397 and 407–436; these read GEPQ…QQLY and KATT…VQYF. Positions 377, 380, 383, 387, 416, 419, 422, and 426 each coordinate [4Fe-4S] cluster. Residues 602 to 718 are disordered; it reads KLEQQQANAE…EEQVDPRKAA (117 aa).

This sequence belongs to the 4Fe4S bacterial-type ferredoxin family. RnfC subfamily. As to quaternary structure, the complex is composed of six subunits: RsxA, RsxB, RsxC, RsxD, RsxE and RsxG. [4Fe-4S] cluster serves as cofactor.

Its subcellular location is the cell inner membrane. Part of a membrane-bound complex that couples electron transfer with translocation of ions across the membrane. Required to maintain the reduced state of SoxR. The sequence is that of Ion-translocating oxidoreductase complex subunit C from Shigella sonnei (strain Ss046).